Here is a 475-residue protein sequence, read N- to C-terminus: Methylenetetrahydrofolate--tRNA-(uracil-5-)-methyltransferase TrmFO (475 aa).

Position 9-14 (9-14 (GGGLAG)) interacts with FAD. The segment at 427–447 (APRNETGRRLRGPEKAALKKR) is disordered.

It belongs to the MnmG family. TrmFO subfamily. FAD serves as cofactor.

The protein localises to the cytoplasm. It carries out the reaction uridine(54) in tRNA + (6R)-5,10-methylene-5,6,7,8-tetrahydrofolate + NADH + H(+) = 5-methyluridine(54) in tRNA + (6S)-5,6,7,8-tetrahydrofolate + NAD(+). The catalysed reaction is uridine(54) in tRNA + (6R)-5,10-methylene-5,6,7,8-tetrahydrofolate + NADPH + H(+) = 5-methyluridine(54) in tRNA + (6S)-5,6,7,8-tetrahydrofolate + NADP(+). In terms of biological role, catalyzes the folate-dependent formation of 5-methyl-uridine at position 54 (M-5-U54) in all tRNAs. In Methylobacterium radiotolerans (strain ATCC 27329 / DSM 1819 / JCM 2831 / NBRC 15690 / NCIMB 10815 / 0-1), this protein is Methylenetetrahydrofolate--tRNA-(uracil-5-)-methyltransferase TrmFO.